We begin with the raw amino-acid sequence, 436 residues long: GTPase Der (436 aa).

2 EngA-type G domains span residues Pro-4 to Glu-167 and Ile-176 to Lys-351. Residues Gly-10–Ser-17, Asp-57–Ile-61, Asn-119–Asp-122, Gly-182–Ser-189, Asp-229–Met-233, and Asn-294–Asp-297 contribute to the GTP site. Positions Lys-352–Asn-436 constitute a KH-like domain.

It belongs to the TRAFAC class TrmE-Era-EngA-EngB-Septin-like GTPase superfamily. EngA (Der) GTPase family. As to quaternary structure, associates with the 50S ribosomal subunit.

In terms of biological role, GTPase that plays an essential role in the late steps of ribosome biogenesis. The protein is GTPase Der of Staphylococcus aureus (strain Mu3 / ATCC 700698).